The primary structure comprises 369 residues: CCA-adding enzyme (369 aa).

ATP contacts are provided by G8 and R11. CTP-binding residues include G8 and R11. Mg(2+) is bound by residues D21 and D23. The ATP site is built by R91, R137, and R140. Positions 91, 137, and 140 each coordinate CTP.

Belongs to the tRNA nucleotidyltransferase/poly(A) polymerase family. Bacterial CCA-adding enzyme type 2 subfamily. The cofactor is Mg(2+).

It catalyses the reaction a tRNA precursor + 2 CTP + ATP = a tRNA with a 3' CCA end + 3 diphosphate. The enzyme catalyses a tRNA with a 3' CCA end + 2 CTP + ATP = a tRNA with a 3' CCACCA end + 3 diphosphate. Its function is as follows. Catalyzes the addition and repair of the essential 3'-terminal CCA sequence in tRNAs without using a nucleic acid template. Adds these three nucleotides in the order of C, C, and A to the tRNA nucleotide-73, using CTP and ATP as substrates and producing inorganic pyrophosphate. tRNA 3'-terminal CCA addition is required both for tRNA processing and repair. Also involved in tRNA surveillance by mediating tandem CCA addition to generate a CCACCA at the 3' terminus of unstable tRNAs. While stable tRNAs receive only 3'-terminal CCA, unstable tRNAs are marked with CCACCA and rapidly degraded. This Francisella tularensis subsp. novicida (strain U112) protein is CCA-adding enzyme.